Here is a 264-residue protein sequence, read N- to C-terminus: Thiazole synthase (264 aa).

K106 serves as the catalytic Schiff-base intermediate with DXP. 1-deoxy-D-xylulose 5-phosphate contacts are provided by residues G167, A193–G194, and N215–T216.

Belongs to the ThiG family. Homotetramer. Forms heterodimers with either ThiH or ThiS.

The protein resides in the cytoplasm. The catalysed reaction is [ThiS sulfur-carrier protein]-C-terminal-Gly-aminoethanethioate + 2-iminoacetate + 1-deoxy-D-xylulose 5-phosphate = [ThiS sulfur-carrier protein]-C-terminal Gly-Gly + 2-[(2R,5Z)-2-carboxy-4-methylthiazol-5(2H)-ylidene]ethyl phosphate + 2 H2O + H(+). It participates in cofactor biosynthesis; thiamine diphosphate biosynthesis. In terms of biological role, catalyzes the rearrangement of 1-deoxy-D-xylulose 5-phosphate (DXP) to produce the thiazole phosphate moiety of thiamine. Sulfur is provided by the thiocarboxylate moiety of the carrier protein ThiS. In vitro, sulfur can be provided by H(2)S. The chain is Thiazole synthase from Xanthomonas axonopodis pv. citri (strain 306).